The chain runs to 416 residues: Exodeoxyribonuclease 7 large subunit (416 aa).

This sequence belongs to the XseA family. Heterooligomer composed of large and small subunits.

It localises to the cytoplasm. The enzyme catalyses Exonucleolytic cleavage in either 5'- to 3'- or 3'- to 5'-direction to yield nucleoside 5'-phosphates.. In terms of biological role, bidirectionally degrades single-stranded DNA into large acid-insoluble oligonucleotides, which are then degraded further into small acid-soluble oligonucleotides. This Sulfurimonas denitrificans (strain ATCC 33889 / DSM 1251) (Thiomicrospira denitrificans (strain ATCC 33889 / DSM 1251)) protein is Exodeoxyribonuclease 7 large subunit.